The primary structure comprises 130 residues: Protein ApaG (130 aa).

Residues 3–127 form the ApaG domain; sequence SAVTRGIEVT…FSLDVPEQRR (125 aa).

The sequence is that of Protein ApaG from Brucella abortus (strain S19).